The chain runs to 513 residues: ATP synthase subunit alpha (513 aa).

169 to 176 (GDRQTGKT) provides a ligand contact to ATP.

The protein belongs to the ATPase alpha/beta chains family. As to quaternary structure, F-type ATPases have 2 components, CF(1) - the catalytic core - and CF(0) - the membrane proton channel. CF(1) has five subunits: alpha(3), beta(3), gamma(1), delta(1), epsilon(1). CF(0) has three main subunits: a(1), b(2) and c(9-12). The alpha and beta chains form an alternating ring which encloses part of the gamma chain. CF(1) is attached to CF(0) by a central stalk formed by the gamma and epsilon chains, while a peripheral stalk is formed by the delta and b chains.

It is found in the cell inner membrane. The enzyme catalyses ATP + H2O + 4 H(+)(in) = ADP + phosphate + 5 H(+)(out). In terms of biological role, produces ATP from ADP in the presence of a proton gradient across the membrane. The alpha chain is a regulatory subunit. This Actinobacillus pleuropneumoniae serotype 7 (strain AP76) protein is ATP synthase subunit alpha.